An 87-amino-acid polypeptide reads, in one-letter code: uncharacterized protein (87 aa).

Residues isoleucine 63 to phenylalanine 83 traverse the membrane as a helical segment.

The protein localises to the membrane. This is an uncharacterized protein from Dictyostelium discoideum (Social amoeba).